The chain runs to 340 residues: Ketol-acid reductoisomerase (NADP(+)) (340 aa).

The KARI N-terminal Rossmann domain occupies 1 to 182 (MTVTMQYEKD…GSARVGLLET (182 aa)). NADP(+) is bound by residues 26–29 (YGSQ), R49, S53, and 83–86 (DEIQ). The active site involves H108. Position 134 (G134) interacts with NADP(+). In terms of domain architecture, KARI C-terminal knotted spans 183-328 (TFKEETEEDL…AELRKAMPFV (146 aa)). Residues D191, E195, E227, and E231 each coordinate Mg(2+). Position 252 (S252) interacts with substrate.

Belongs to the ketol-acid reductoisomerase family. Requires Mg(2+) as cofactor.

The catalysed reaction is (2R)-2,3-dihydroxy-3-methylbutanoate + NADP(+) = (2S)-2-acetolactate + NADPH + H(+). The enzyme catalyses (2R,3R)-2,3-dihydroxy-3-methylpentanoate + NADP(+) = (S)-2-ethyl-2-hydroxy-3-oxobutanoate + NADPH + H(+). The protein operates within amino-acid biosynthesis; L-isoleucine biosynthesis; L-isoleucine from 2-oxobutanoate: step 2/4. Its pathway is amino-acid biosynthesis; L-valine biosynthesis; L-valine from pyruvate: step 2/4. Involved in the biosynthesis of branched-chain amino acids (BCAA). Catalyzes an alkyl-migration followed by a ketol-acid reduction of (S)-2-acetolactate (S2AL) to yield (R)-2,3-dihydroxy-isovalerate. In the isomerase reaction, S2AL is rearranged via a Mg-dependent methyl migration to produce 3-hydroxy-3-methyl-2-ketobutyrate (HMKB). In the reductase reaction, this 2-ketoacid undergoes a metal-dependent reduction by NADPH to yield (R)-2,3-dihydroxy-isovalerate. The polypeptide is Ketol-acid reductoisomerase (NADP(+)) (Streptococcus suis (strain 98HAH33)).